Here is a 599-residue protein sequence, read N- to C-terminus: Dictomallein-2 (599 aa).

The first 20 residues, 1-20 (MKLILIYLILVFNLFNFINC), serve as a signal peptide directing secretion. The Peptidase M66 domain maps to 145-407 (PDVGQDYTLK…QNYFKNSIYY (263 aa)). Histidine 298 contributes to the Zn(2+) binding site. The active site involves glutamate 299. 2 residues coordinate Zn(2+): histidine 302 and histidine 308.

The protein belongs to the dictomallein family. The cofactor is Zn(2+).

Its subcellular location is the secreted. This is Dictomallein-2 (dtmlB) from Dictyostelium discoideum (Social amoeba).